The chain runs to 154 residues: Fibroblast growth factor 2 (154 aa).

The propeptide occupies 1–9 (MAAGSITSL). The segment at 1–20 (MAAGSITSLPALPEDGGGAF) is disordered. A heparin-binding site is contributed by N35. The residue at position 81 (Y81) is a Phosphotyrosine; by TEC. A Glycyl lysine isopeptide (Lys-Gly) (interchain with G-Cter in SUMO1) cross-link involves residue K94. The segment at 127–143 (KRTGQYKLGSKTGPGQK) is heparin-binding.

Belongs to the heparin-binding growth factors family. In terms of assembly, monomer. Homodimer. Interacts with FGFR1, FGFR2, FGFR3 and FGFR4. Affinity between fibroblast growth factors (FGFs) and their receptors is increased by heparan sulfate glycosaminoglycans that function as coreceptors. Interacts with CSPG4, FGFBP1 and TEC. Found in a complex with FGFBP1, FGF1 and FGF2. Interacts with FGFBP3. Interacts with integrin ITGAV:ITGB3; the interaction is required for FGF2 signaling. Interacts with SNORC (via the extracellular domain). Interacts with GPC3. In terms of processing, phosphorylation at Tyr-81 regulates FGF2 unconventional secretion. As to expression, found in all tissues examined.

The protein localises to the secreted. It localises to the nucleus. Functionally, acts as a ligand for FGFR1, FGFR2, FGFR3 and FGFR4. Also acts as an integrin ligand which is required for FGF2 signaling. Binds to integrin ITGAV:ITGB3. Plays an important role in the regulation of cell survival, cell division, cell differentiation and cell migration. Functions as a potent mitogen in vitro. Can induce angiogenesis. Mediates phosphorylation of ERK1/2 and thereby promotes retinal lens fiber differentiation. This is Fibroblast growth factor 2 (Fgf2) from Rattus norvegicus (Rat).